The following is a 439-amino-acid chain: GTPase Der (439 aa).

EngA-type G domains are found at residues 4 to 168 (PIVA…KDDE) and 177 to 352 (INIA…DNYN). Residues 10-17 (GRPNVGKS), 57-61 (DTGGI), 120-123 (NKID), 183-190 (GKPNVGKS), 230-234 (DTAGL), and 295-298 (NKWD) contribute to the GTP site. Residues 353–437 (KRVKTGVLND…GIKSEFRERK (85 aa)) enclose the KH-like domain.

This sequence belongs to the TRAFAC class TrmE-Era-EngA-EngB-Septin-like GTPase superfamily. EngA (Der) GTPase family. As to quaternary structure, associates with the 50S ribosomal subunit.

Its function is as follows. GTPase that plays an essential role in the late steps of ribosome biogenesis. The polypeptide is GTPase Der (Clostridium botulinum (strain ATCC 19397 / Type A)).